An 89-amino-acid polypeptide reads, in one-letter code: Histone H3.v2 (89 aa).

It belongs to the histone H3 family.

The chain is Histone H3.v2 (H3v2) from Dictyostelium discoideum (Social amoeba).